The sequence spans 109 residues: Small ribosomal subunit protein bS6 (109 aa).

The protein belongs to the bacterial ribosomal protein bS6 family.

Functionally, binds together with bS18 to 16S ribosomal RNA. The polypeptide is Small ribosomal subunit protein bS6 (Ehrlichia chaffeensis (strain ATCC CRL-10679 / Arkansas)).